Reading from the N-terminus, the 201-residue chain is ATP-dependent dethiobiotin synthetase BioD (201 aa).

11–16 contributes to the ATP binding site; that stretch reads DVGKTH. Thr-15 contacts Mg(2+). Lys-31 is a catalytic residue. ATP-binding positions include Asp-40 and 93 to 96; that span reads ELAG. Asp-40 and Glu-93 together coordinate Mg(2+).

This sequence belongs to the dethiobiotin synthetase family. As to quaternary structure, homodimer. Mg(2+) is required as a cofactor.

The protein localises to the cytoplasm. It carries out the reaction (7R,8S)-7,8-diammoniononanoate + CO2 + ATP = (4R,5S)-dethiobiotin + ADP + phosphate + 3 H(+). It functions in the pathway cofactor biosynthesis; biotin biosynthesis; biotin from 7,8-diaminononanoate: step 1/2. Catalyzes a mechanistically unusual reaction, the ATP-dependent insertion of CO2 between the N7 and N8 nitrogen atoms of 7,8-diaminopelargonic acid (DAPA, also called 7,8-diammoniononanoate) to form a ureido ring. The protein is ATP-dependent dethiobiotin synthetase BioD of Campylobacter jejuni subsp. jejuni serotype O:6 (strain 81116 / NCTC 11828).